The primary structure comprises 238 residues: Transmembrane protein 127 (238 aa).

The residue at position 1 (M1) is an N-acetylmethionine. Gly residues predominate over residues 1–11 (MYAPGGAGLPG). Residues 1 to 27 (MYAPGGAGLPGGRRRRSPGGSALPKQP) form a disordered region. S17 is modified (phosphoserine). 3 helical membrane passes run 96–116 (IAAF…LDVF), 130–150 (AFAH…SYWA), and 169–189 (VYVT…ASIL).

The protein belongs to the TMEM127 family. Widely expressed.

The protein localises to the cell membrane. It localises to the cytoplasm. Functionally, controls cell proliferation acting as a negative regulator of TOR signaling pathway mediated by mTORC1. May act as a tumor suppressor. The sequence is that of Transmembrane protein 127 (TMEM127) from Homo sapiens (Human).